Reading from the N-terminus, the 398-residue chain is MSFDRNQDGKLKVKTSSKLPVSPTFESMKLQENLLRGIYGYGFEAPSAIQSRAITQIIRGKDVIAQAQSGTGKTATFTIGMLQVIDSSSKDLQALVLSPTRELAAQISQVVRNLGDYMNVVALACTGGKALQQDISKVNKGCHVMSGTPGRVLDMIKRRIINTRHVKMLVLDEADELLSETLGFKQQLYDIFTKLPSSVQVVVVSATMSKDVLEVTKKFMSDPVKILVKRDEVSLEGIKQYHINVDKEEWKFDTLCDLYDSLTITQCVIFCNTKKKVDWLSHKLIQNNFAVASIHGDMKQDDRDKVMSDFRSGSSRVLISTDVWARGIDVQQVSLVINYDLPELLENYIHRIGRSGRFGRKGVAINFITREEVTKLKSIEKHYSIKIKPMPADIDSLS.

The Q motif signature appears at 23-51 (PTFESMKLQENLLRGIYGYGFEAPSAIQS). In terms of domain architecture, Helicase ATP-binding spans 54-226 (ITQIIRGKDV…KKFMSDPVKI (173 aa)). 67-74 (AQSGTGKT) contributes to the ATP binding site. The DEAD box motif lies at 172–175 (DEAD). Residues 237-398 (GIKQYHINVD…PMPADIDSLS (162 aa)) enclose the Helicase C-terminal domain.

It belongs to the DEAD box helicase family. DDX48/FAL1 subfamily.

It localises to the nucleus. The protein localises to the nucleolus. The enzyme catalyses ATP + H2O = ADP + phosphate + H(+). ATP-dependent RNA helicase involved in 40S ribosomal subunit biogenesis. Required for the processing and cleavage of 35S pre-rRNA at sites A0, A1, and A2, leading to mature 18S rRNA. This chain is ATP-dependent RNA helicase FAL1 (FAL1), found in Eremothecium gossypii (strain ATCC 10895 / CBS 109.51 / FGSC 9923 / NRRL Y-1056) (Yeast).